The primary structure comprises 100 residues: Urease subunit gamma (100 aa).

This sequence belongs to the urease gamma subunit family. As to quaternary structure, heterotrimer of UreA (gamma), UreB (beta) and UreC (alpha) subunits. Three heterotrimers associate to form the active enzyme.

The protein localises to the cytoplasm. The enzyme catalyses urea + 2 H2O + H(+) = hydrogencarbonate + 2 NH4(+). It participates in nitrogen metabolism; urea degradation; CO(2) and NH(3) from urea (urease route): step 1/1. The protein is Urease subunit gamma of Polaromonas naphthalenivorans (strain CJ2).